The sequence spans 315 residues: MKIFFVSSSSIALEVFKEIVKHYEVVGVLTLPDKPKGRGQKLSQNVIKLEAIAKNIKVFDPLILDDNILNLIRDLNPDLMLVFSYGKIFKKEFLDIFPKGCINVHPSLLPKYRGVSPIQSAILNGDCVSGITIQNMALKMDSGNILVQKNFKIKSCDTSYDISKLVSSLSPNLVLEALEKIGKGFLGIPQKSSEATFCSFFKKESGFVDFNLSAFEIKNRINACNPWPLARARLDYGDIIFHRADFLKIDLYKEKKVGEIVDFDSEKGLFVNTGEGILLLLEVQRPGRRVLDYKSFYNGSRQLIGQVFSSIGGVY.

107–110 (SLLP) serves as a coordination point for (6S)-5,6,7,8-tetrahydrofolate.

Belongs to the Fmt family.

It carries out the reaction L-methionyl-tRNA(fMet) + (6R)-10-formyltetrahydrofolate = N-formyl-L-methionyl-tRNA(fMet) + (6S)-5,6,7,8-tetrahydrofolate + H(+). Its function is as follows. Attaches a formyl group to the free amino group of methionyl-tRNA(fMet). The formyl group appears to play a dual role in the initiator identity of N-formylmethionyl-tRNA by promoting its recognition by IF2 and preventing the misappropriation of this tRNA by the elongation apparatus. This chain is Methionyl-tRNA formyltransferase, found in Borreliella afzelii (strain PKo) (Borrelia afzelii).